The sequence spans 363 residues: Mannose-1-phosphate guanyltransferase (363 aa).

It belongs to the transferase hexapeptide repeat family.

The protein localises to the cytoplasm. It catalyses the reaction alpha-D-mannose 1-phosphate + GTP + H(+) = GDP-alpha-D-mannose + diphosphate. It participates in nucleotide-sugar biosynthesis; GDP-alpha-D-mannose biosynthesis; GDP-alpha-D-mannose from alpha-D-mannose 1-phosphate (GTP route): step 1/1. Involved in cell wall synthesis where it is required for glycosylation. Involved in cell cycle progression through cell-size checkpoint. This Yarrowia lipolytica (strain CLIB 122 / E 150) (Yeast) protein is Mannose-1-phosphate guanyltransferase (MPG1).